The following is a 344-amino-acid chain: MLTERQLLILQVIIDDFIRSGQPVGSRTLSKKHEIALSSATIRNEMADLEELGYIEKTHVSSGRVPSEKGYRYYVDHLLSPQRLTKDDIQKIKSIFAERIYELEKVVQKSAQILSDLTNYTSIALGPAVKENKLKRIQIIPLNQQTAVAIIVTDTGHVENHVITVPASVNPSDLEKMVNIFNERLIGVPLVDLKDKIYKKVADVLRKHIRNYDSMLQTIVETLDIPQEEKMFFAGKTNMLNQPEFNDIQKIRPLMKMIEQEKDFYRLLRKHNRKGIQVTIGRENQLSEMENCSLITATYSIGDEQLGTIAILGPTRMEYSRVITILNRVASDLSIALTKWYQNG.

Belongs to the HrcA family.

Negative regulator of class I heat shock genes (grpE-dnaK-dnaJ and groELS operons). Prevents heat-shock induction of these operons. This chain is Heat-inducible transcription repressor HrcA, found in Geobacillus stearothermophilus (Bacillus stearothermophilus).